Reading from the N-terminus, the 382-residue chain is Mannitol-1-phosphate 5-dehydrogenase (382 aa).

Residue 3-14 coordinates NAD(+); it reads ALHFGAGNIGRG.

It belongs to the mannitol dehydrogenase family.

The catalysed reaction is D-mannitol 1-phosphate + NAD(+) = beta-D-fructose 6-phosphate + NADH + H(+). This Tolumonas auensis (strain DSM 9187 / NBRC 110442 / TA 4) protein is Mannitol-1-phosphate 5-dehydrogenase.